The sequence spans 393 residues: Putative cytochrome P450 143 (393 aa).

C342 is a binding site for heme.

This sequence belongs to the cytochrome P450 family. Requires heme as cofactor.

The polypeptide is Putative cytochrome P450 143 (cyp143) (Mycobacterium bovis (strain ATCC BAA-935 / AF2122/97)).